A 287-amino-acid polypeptide reads, in one-letter code: Nucleotide-binding protein MXAN_6564 (287 aa).

Residue 13-20 coordinates ATP; sequence GMSGSGKS. 62 to 65 serves as a coordination point for GTP; the sequence is DVRE.

This sequence belongs to the RapZ-like family.

In terms of biological role, displays ATPase and GTPase activities. This is Nucleotide-binding protein MXAN_6564 from Myxococcus xanthus (strain DK1622).